Reading from the N-terminus, the 292-residue chain is Probable septum site-determining protein MinC (292 aa).

The tract at residues 109 to 188 (QVIDTAPPND…PQSSSALVIT (80 aa)) is disordered. Acidic residues predominate over residues 140-150 (QDDEADGEQAD). Over residues 171-185 (ANRPTATPPQSSSAL) the composition is skewed to polar residues.

The protein belongs to the MinC family. In terms of assembly, interacts with MinD and FtsZ.

In terms of biological role, cell division inhibitor that blocks the formation of polar Z ring septums. Rapidly oscillates between the poles of the cell to destabilize FtsZ filaments that have formed before they mature into polar Z rings. Prevents FtsZ polymerization. This Bordetella pertussis (strain Tohama I / ATCC BAA-589 / NCTC 13251) protein is Probable septum site-determining protein MinC.